Here is a 679-residue protein sequence, read N- to C-terminus: Glutamine-dependent NAD(+) synthetase (679 aa).

Residues 12–276 form the CN hydrolase domain; sequence VRVAACTHHT…VRRSVADVDT (265 aa). The active-site Proton acceptor; for glutaminase activity is E52. The For glutaminase activity role is filled by K121. Position 127 (Y127) interacts with L-glutamine. C176 functions as the Nucleophile; for glutaminase activity in the catalytic mechanism. 2 residues coordinate L-glutamine: S203 and R209. Residues 337–679 are ligase; it reads QQDCYEAYNI…DQIDREVPKG (343 aa). Residue 366-373 participates in ATP binding; sequence GVSGGLDS. N456 contacts deamido-NAD(+). T480 is an ATP binding site. Deamido-NAD(+) contacts are provided by residues E485, 490–493, and K635; that span reads WSTY. Residues 639–658 are disordered; that stretch reads LPNGPKVSHGGALSPRGDWR.

It in the C-terminal section; belongs to the NAD synthetase family.

The catalysed reaction is deamido-NAD(+) + L-glutamine + ATP + H2O = L-glutamate + AMP + diphosphate + NAD(+) + H(+). It participates in cofactor biosynthesis; NAD(+) biosynthesis; NAD(+) from deamido-NAD(+) (L-Gln route): step 1/1. Its function is as follows. Catalyzes the ATP-dependent amidation of deamido-NAD to form NAD. Uses L-glutamine as a nitrogen source. The protein is Glutamine-dependent NAD(+) synthetase of Mycobacterium bovis (strain ATCC BAA-935 / AF2122/97).